The primary structure comprises 555 residues: Serine/threonine-protein kinase AGC1-7 (555 aa).

The segment at 1-126 (MLTKPGKKLD…PSKPHTGGDI (126 aa)) is disordered. Basic and acidic residues-rich tracts occupy residues 7–16 (KKLDSSESTH) and 35–54 (PRKE…DNLI). A compositionally biased stretch (low complexity) spans 84–118 (SQSNLNTKPNNNNSNNNSNMSSRSNSIESTSSNPS). The Protein kinase domain maps to 146 to 480 (FRLLKRLGYG…ATEIKQHPFF (335 aa)). Residues 152–160 (LGYGDIGSV) and Lys175 each bind ATP. The active-site Proton acceptor is the Asp271. Residues 481–555 (EGVNWALIRS…DPDYIDFEYF (75 aa)) enclose the AGC-kinase C-terminal domain. The tract at residues 514–547 (AAVDGGGKKNNNGAGGGCSTGGGDNKPNGDCNDP) is disordered. Residues 526 to 537 (GAGGGCSTGGGD) show a composition bias toward gly residues.

This sequence belongs to the protein kinase superfamily. AGC Ser/Thr protein kinase family. In terms of assembly, interacts with PDPK1/PDK1. Autophosphorylated and phosphorylated by PDPK1/PDK1. Specifically expressed in pollen grains.

The protein localises to the cytoplasm. The catalysed reaction is L-seryl-[protein] + ATP = O-phospho-L-seryl-[protein] + ADP + H(+). It catalyses the reaction L-threonyl-[protein] + ATP = O-phospho-L-threonyl-[protein] + ADP + H(+). Its activity is regulated as follows. Activated by PDPK1/PDK1. Functions redudantly with AGC1-5 as signaling component in the pollen tube. Required for polarized growth of pollen tubes. The protein is Serine/threonine-protein kinase AGC1-7 of Arabidopsis thaliana (Mouse-ear cress).